The chain runs to 154 residues: Myoglobin-2 (154 aa).

The Globin domain maps to 2 to 148 (GLSDGEWQLV…FRKDIATKYK (147 aa)). H65 is a binding site for nitrite. H65 contributes to the O2 binding site. Position 94 (H94) interacts with heme b.

The protein belongs to the globin family. Monomeric.

It is found in the cytoplasm. Its subcellular location is the sarcoplasm. The catalysed reaction is Fe(III)-heme b-[protein] + nitric oxide + H2O = Fe(II)-heme b-[protein] + nitrite + 2 H(+). It catalyses the reaction H2O2 + AH2 = A + 2 H2O. Its function is as follows. Monomeric heme protein which primary function is to store oxygen and facilitate its diffusion within muscle tissues. Reversibly binds oxygen through a pentacoordinated heme iron and enables its timely and efficient release as needed during periods of heightened demand. Depending on the oxidative conditions of tissues and cells, and in addition to its ability to bind oxygen, it also has a nitrite reductase activity whereby it regulates the production of bioactive nitric oxide. Under stress conditions, like hypoxia and anoxia, it also protects cells against reactive oxygen species thanks to its pseudoperoxidase activity. The polypeptide is Myoglobin-2 (MB2) (Stenella attenuata (Pantropical spotted dolphin)).